The primary structure comprises 355 residues: Tetraacyldisaccharide 4'-kinase (355 aa).

Position 64–71 (64–71 (YVGGTGKT)) interacts with ATP. The interval 206–226 (NRAPQSSATPTAASGQGPRRA) is disordered. Residues 208–222 (APQSSATPTAASGQG) show a composition bias toward low complexity.

Belongs to the LpxK family.

The catalysed reaction is a lipid A disaccharide + ATP = a lipid IVA + ADP + H(+). Its pathway is glycolipid biosynthesis; lipid IV(A) biosynthesis; lipid IV(A) from (3R)-3-hydroxytetradecanoyl-[acyl-carrier-protein] and UDP-N-acetyl-alpha-D-glucosamine: step 6/6. Functionally, transfers the gamma-phosphate of ATP to the 4'-position of a tetraacyldisaccharide 1-phosphate intermediate (termed DS-1-P) to form tetraacyldisaccharide 1,4'-bis-phosphate (lipid IVA). The polypeptide is Tetraacyldisaccharide 4'-kinase (Bordetella petrii (strain ATCC BAA-461 / DSM 12804 / CCUG 43448)).